Reading from the N-terminus, the 91-residue chain is Probable Fe(2+)-trafficking protein (91 aa).

The protein belongs to the Fe(2+)-trafficking protein family.

Its function is as follows. Could be a mediator in iron transactions between iron acquisition and iron-requiring processes, such as synthesis and/or repair of Fe-S clusters in biosynthetic enzymes. In Acidobacterium capsulatum (strain ATCC 51196 / DSM 11244 / BCRC 80197 / JCM 7670 / NBRC 15755 / NCIMB 13165 / 161), this protein is Probable Fe(2+)-trafficking protein.